Consider the following 185-residue polypeptide: UPF0397 protein CPF_1836 (185 aa).

5 consecutive transmembrane segments (helical) span residues 11–31 (IVAI…GSLP), 44–64 (AFLA…IGFI), 71–91 (IVFF…VGLI), 111–131 (IFMF…LVAP), and 149–169 (GVIG…ILIA).

This sequence belongs to the UPF0397 family.

It is found in the cell membrane. The chain is UPF0397 protein CPF_1836 from Clostridium perfringens (strain ATCC 13124 / DSM 756 / JCM 1290 / NCIMB 6125 / NCTC 8237 / Type A).